We begin with the raw amino-acid sequence, 519 residues long: MAMCARLCGVGQSGGCRRRQQRKGAGNDPELEDEEEEDEVRIEAGEAAVTPRRPHSLLLLPPEILVEIFSLLPGTELGGLAQVCSKFRQILTTDTIWKRRCRQEYGVCENLRKLEVTGVSCHDVYVKLLHQYRHILGLWQPDIGPYGGLLNVVVDGLFIIGWMYLPPHDPHVDEAMRMKPVFRIHLMERKDATVECMYGHKGPHNSQIQIVKKDEFSTKCLQTDYHRMSGGRQEEFRTWLREDLGRTLEDIFHEHMQELILMKFIYICQYDNCLTYRRIYHPPSHPEDLLNPGFFKGTYGSHGLEIVMLSFHGTIAKVTKITGDPNVPAGQQTVEVDLTRPVQLPDVEHLRNFDEMSRLILDVQAQIHREQRQTDNEEDDGRGAGPDKAEPAQQPAPLLRPPNEDANGADDDGDGGEQKPPNVQSFVLPAGVMARNEEYPRSCKMCFYGTGLIAGHGFSSPERTPGLFILFDEDRFGFIWLELKSFSLYSRMRDRFQQSEAPSLEAFEEMLQNMQSWTT.

Positions 11 to 37 are disordered; the sequence is GQSGGCRRRQQRKGAGNDPELEDEEEE. Positions 54–100 constitute an F-box domain; the sequence is PHSLLLLPPEILVEIFSLLPGTELGGLAQVCSKFRQILTTDTIWKRR. Residues cysteine 196, histidine 204, cysteine 220, and histidine 226 each contribute to the Zn(2+) site. Residues 369–390 show a composition bias toward basic and acidic residues; sequence REQRQTDNEEDDGRGAGPDKAE. Residues 369 to 424 form a disordered region; that stretch reads REQRQTDNEEDDGRGAGPDKAEPAQQPAPLLRPPNEDANGADDDGDGGEQKPPNVQ.

The protein belongs to the FBXO31 family. Part of a SCF (SKP1-cullin-F-box) protein ligase complex SCF(FBXO31).

The protein resides in the cytoplasm. It functions in the pathway protein modification; protein ubiquitination. Its function is as follows. Substrate-recognition component of the SCF(FBXO31) protein ligase complex, which specifically mediates the ubiquitination of proteins amidated at their C-terminus in response to oxidative stress, leading to their degradation by the proteasome. Fbxo31 specifically recognizes and binds C-terminal peptides bearing an amide: C-terminal amidation in response to oxidative stress takes place following protein fragmentation. The SCF(FBXO31) also plays a role in G1 arrest following DNA damage by mediating ubiquitination of phosphorylated cyclin-D1 (ccnd1), promoting its degradation by the proteasome, resulting in G1 arrest. The SCF(FBXO31) complex is however not a major regulator of ccnd1 stability during the G1/S transition. The chain is F-box only protein 31-A (fbxo31-a) from Xenopus laevis (African clawed frog).